A 374-amino-acid polypeptide reads, in one-letter code: LIM domain-binding protein 1-A (374 aa).

Disordered regions lie at residues 1 to 24 (MLDR…IGRH), 249 to 297 (PPAE…ALSS), and 322 to 374 (TRLE…QSSQ). Low complexity predominate over residues 267–297 (SGGSTMSSGGGNNNNSNSKKKSPASSFALSS). An LIM interaction domain (LID) domain is found at 299–338 (DVMVVGEPTLMGGEFGDEDERLITRLENTQFDAANGIDDE). Residues 341 to 374 (FNSSPTMGTNSPWNSKAPSSQQGKNDNPSSQSSQ) are compositionally biased toward polar residues.

This sequence belongs to the LDB family. As to expression, expressed ubiquitously in the embryo and adult.

The protein localises to the nucleus. In terms of biological role, binds to the LIM domain of a wide variety of LIM domain-containing transcription factors. This is LIM domain-binding protein 1-A (ldb1a) from Danio rerio (Zebrafish).